Consider the following 562-residue polypeptide: Proton channel OTOP2 (562 aa).

The interval 1–20 (MSEELAQGPKESPPAPRAGP) is disordered. A run of 12 helical transmembrane segments spans residues 30–50 (LLSV…ISGG), 62–82 (VFAL…FYLL), 100–120 (PIWL…MDVF), 137–157 (ILHP…LWVS), 169–189 (TWCG…AAVV), 241–261 (FYLY…LYVM), 289–309 (FFAG…VFII), 324–344 (ALVI…LVSL), 371–391 (LLMG…VAVV), 402–422 (LNLT…MFII), 495–515 (DISL…AFGA), and 527–547 (FYGY…GIFY).

Belongs to the otopetrin family.

The protein localises to the cell membrane. The catalysed reaction is H(+)(in) = H(+)(out). Its activity is regulated as follows. Actives at neutral and alkaline extracellular pH, acid extracellular pH appears to inhibit the channel. Insensitive to activation by Zn(2+). In terms of biological role, proton-selective ion channel open at neutral pH. Actives at neutral and alkaline extracellular pH, likely participates in some alkali-related physiological activities. This is Proton channel OTOP2 from Homo sapiens (Human).